Reading from the N-terminus, the 110-residue chain is Large ribosomal subunit protein uL22 (110 aa).

It belongs to the universal ribosomal protein uL22 family. As to quaternary structure, part of the 50S ribosomal subunit.

In terms of biological role, this protein binds specifically to 23S rRNA; its binding is stimulated by other ribosomal proteins, e.g. L4, L17, and L20. It is important during the early stages of 50S assembly. It makes multiple contacts with different domains of the 23S rRNA in the assembled 50S subunit and ribosome. Its function is as follows. The globular domain of the protein is located near the polypeptide exit tunnel on the outside of the subunit, while an extended beta-hairpin is found that lines the wall of the exit tunnel in the center of the 70S ribosome. The protein is Large ribosomal subunit protein uL22 of Syntrophotalea carbinolica (strain DSM 2380 / NBRC 103641 / GraBd1) (Pelobacter carbinolicus).